A 371-amino-acid chain; its full sequence is 4-hydroxy-3-methylbut-2-en-1-yl diphosphate synthase (flavodoxin) (371 aa).

4 residues coordinate [4Fe-4S] cluster: Cys270, Cys273, Cys305, and Glu312.

The protein belongs to the IspG family. The cofactor is [4Fe-4S] cluster.

The enzyme catalyses (2E)-4-hydroxy-3-methylbut-2-enyl diphosphate + oxidized [flavodoxin] + H2O + 2 H(+) = 2-C-methyl-D-erythritol 2,4-cyclic diphosphate + reduced [flavodoxin]. The protein operates within isoprenoid biosynthesis; isopentenyl diphosphate biosynthesis via DXP pathway; isopentenyl diphosphate from 1-deoxy-D-xylulose 5-phosphate: step 5/6. Its function is as follows. Converts 2C-methyl-D-erythritol 2,4-cyclodiphosphate (ME-2,4cPP) into 1-hydroxy-2-methyl-2-(E)-butenyl 4-diphosphate. The sequence is that of 4-hydroxy-3-methylbut-2-en-1-yl diphosphate synthase (flavodoxin) from Shewanella pealeana (strain ATCC 700345 / ANG-SQ1).